Reading from the N-terminus, the 408-residue chain is MRKRKQQVYNDNLIVSRSNKRSSTSGKETCYFDPIPVDLVINILSRLSLECIARCRCVSKLWSSIIRRPNYNQLFPVKSSATPRLLFVFKVARELFFNSSPQHFNPNNSSLVATSLQKTSSTRFSQLCRPVHGLICSQHIEENYLFALISNPTTGEYIALPKQRMEEMNSETIIEKVRYSFGYDPIDKQFKVLRITWLHRGSHEWSSEYQVLTLGFGNISWRNTQCCVVHYLLEDSGICINGVLYYPARLDNRKYTIVCFDVMTEKFSFTSIDKDMTIMTNLSFSLIDYKGKLGACICDHTLFELWVLENAEEHKWSKNIYNMPYSRSRLEETSYLKCAGMIASGEILLYPISSANTSTDARYPFIYYYNLERNIITRVTLQVPILKQFTYARLFYTFSNFLENVTLI.

The F-box domain occupies 29 to 74 (TCYFDPIPVDLVINILSRLSLECIARCRCVSKLWSSIIRRPNYNQL).

The sequence is that of Putative F-box protein At1g53550 from Arabidopsis thaliana (Mouse-ear cress).